Reading from the N-terminus, the 436-residue chain is MVGFGANRRAGRLPSLVLVVLLVVIVVLAFNYWSISSRHVLLQEEVAELQGQVQRTEVARGRLEKRNSGLLLLVDTHKKQIDQKEADYGRLSSRLQAREGLGKRCEDDKVKLQNNISYQMADIHHLKEQLAELRQEFLRQEDQLQDYRKNNTYLVKRLEYESFQCGQQIKELRAQHEENIKKLADQFLQEQKQEAHKIQSNDGKELDINDQVVPKNIPKVAENVADKNEEPSSNHIPHGKEQIKRGGDAGMPGIEENDLAKVDDLPPALRKPPISVSQHESHQTISHIPTGQPLSPNMPPDSHVNHNGNPGTSKQNPSSPLQRLIPGSNLDSEPRIQTDILKQATKDRVSDFHKLKQSRFFDENESPVDPQHGSKLADYNGDDGNVGEYEADKQAELAYNEEEDGDGGEEDVQDDEERELQMDPADYGKQHFNDVL.

An N-acetylmethionine modification is found at Met-1. At 1-14 (MVGFGANRRAGRLP) the chain is on the cytoplasmic side. The chain crosses the membrane as a helical; Signal-anchor for type II membrane protein span at residues 15–35 (SLVLVVLLVVIVVLAFNYWSI). Residues 35-195 (ISSRHVLLQE…QFLQEQKQEA (161 aa)) adopt a coiled-coil conformation. Over 36–436 (SSRHVLLQEE…YGKQHFNDVL (401 aa)) the chain is Lumenal. Composition is skewed to basic and acidic residues over residues 193–207 (QEAH…KELD) and 224–247 (VADK…KRGG). The interval 193–436 (QEAHKIQSND…YGKQHFNDVL (244 aa)) is disordered. A phosphoserine mark is found at Ser-233 and Ser-275. Composition is skewed to polar residues over residues 275 to 295 (SVSQ…QPLS) and 305 to 321 (NHNG…SSPL). Residues Ser-328 and Ser-332 each carry the phosphoserine modification. Basic and acidic residues predominate over residues 344-362 (ATKDRVSDFHKLKQSRFFD). A Phosphoserine modification is found at Ser-366. Residues 399–418 (YNEEEDGDGGEEDVQDDEER) show a composition bias toward acidic residues. Positions 426–436 (DYGKQHFNDVL) are enriched in basic and acidic residues.

It belongs to the GOLM family.

The protein resides in the membrane. The protein is Protein GOLM2 (GOLM2) of Pongo abelii (Sumatran orangutan).